Consider the following 250-residue polypeptide: Ribose-5-phosphate isomerase A (250 aa).

Substrate contacts are provided by residues 33–36 (TGST), 89–92 (DGAD), and 102–105 (KGGG). Glu-111 acts as the Proton acceptor in catalysis. Lys-129 is a substrate binding site.

It belongs to the ribose 5-phosphate isomerase family. Homodimer.

The catalysed reaction is aldehydo-D-ribose 5-phosphate = D-ribulose 5-phosphate. The protein operates within carbohydrate degradation; pentose phosphate pathway; D-ribose 5-phosphate from D-ribulose 5-phosphate (non-oxidative stage): step 1/1. Functionally, catalyzes the reversible conversion of ribose-5-phosphate to ribulose 5-phosphate. This Cereibacter sphaeroides (strain ATCC 17025 / ATH 2.4.3) (Rhodobacter sphaeroides) protein is Ribose-5-phosphate isomerase A.